A 172-amino-acid chain; its full sequence is MTDHTPALQRPATRTARLSAIEQALLTRIVTSQSQLSQILADQGIEVTQATLSRDLDEIHATKTRLADGTVAYAVGKQNIDEHPASNPDAKTEQQISRVLSGLVTSVAAARNLVVVHTPSGAAQYVASVIDKQPIEGVLGTIAGDDTVMVICSEDDVAKRRAQWLLDVASKA.

The protein belongs to the ArgR family.

It localises to the cytoplasm. Its pathway is amino-acid biosynthesis; L-arginine biosynthesis [regulation]. In terms of biological role, regulates arginine biosynthesis genes. This chain is Arginine repressor, found in Bifidobacterium adolescentis (strain ATCC 15703 / DSM 20083 / NCTC 11814 / E194a).